Consider the following 592-residue polypeptide: Methylenetetrahydrofolate reductase (NADH) 1 (592 aa).

The Proton donor/acceptor role is filled by glutamate 21. Residues 21 to 26 (EFFPPK) and 52 to 53 (TW) contribute to the NAD(+) site. Residues 52–53 (TW), histidine 81, 111–113 (RGD), tyrosine 153, 157–160 (HPDV), aspartate 175, and lysine 182 contribute to the FAD site. A substrate-binding site is contributed by aspartate 113. Substrate contacts are provided by glutamine 193 and tyrosine 285.

The protein belongs to the methylenetetrahydrofolate reductase family. As to quaternary structure, homodimer. The cofactor is FAD.

It carries out the reaction (6S)-5-methyl-5,6,7,8-tetrahydrofolate + NAD(+) = (6R)-5,10-methylene-5,6,7,8-tetrahydrofolate + NADH + H(+). The protein operates within one-carbon metabolism; tetrahydrofolate interconversion. Plant MTHFRs strongly prefer NADH over NADPH. Not inhibited by methionine or S-adenosylmethionine. Functionally, the probable reversibility of the MTHFR reaction in plants suggests that they can metabolize the methyl group of 5,10-methylenetetrahydrofolate to serine, sugars and starch. This is Methylenetetrahydrofolate reductase (NADH) 1 (MTHFR1) from Arabidopsis thaliana (Mouse-ear cress).